Consider the following 363-residue polypeptide: Peptide chain release factor 1 (363 aa).

Gln-237 is modified (N5-methylglutamine).

This sequence belongs to the prokaryotic/mitochondrial release factor family. In terms of processing, methylated by PrmC. Methylation increases the termination efficiency of RF1.

It localises to the cytoplasm. Peptide chain release factor 1 directs the termination of translation in response to the peptide chain termination codons UAG and UAA. The polypeptide is Peptide chain release factor 1 (Marinobacter nauticus (strain ATCC 700491 / DSM 11845 / VT8) (Marinobacter aquaeolei)).